Consider the following 70-residue polypeptide: UPF0270 protein VS_2853 (70 aa).

This sequence belongs to the UPF0270 family.

The protein is UPF0270 protein VS_2853 of Vibrio atlanticus (strain LGP32) (Vibrio splendidus (strain Mel32)).